A 499-amino-acid polypeptide reads, in one-letter code: uncharacterized protein (499 aa).

The RING-type; degenerate zinc-finger motif lies at 10-57 (CGICGQEYSEDEKLLIPRILTECGHTICTGCAGKIKGQSSIIACPFDR). Residues 101–147 (NKNGVCDENTNHHASNYCETCDADLCEECWTWIHSISTLAHHEKKMI) form a B box-type; degenerate zinc finger.

This is an uncharacterized protein from Caenorhabditis elegans.